The primary structure comprises 485 residues: Aspartyl/glutamyl-tRNA(Asn/Gln) amidotransferase subunit B (485 aa).

The protein belongs to the GatB/GatE family. GatB subfamily. In terms of assembly, heterotrimer of A, B and C subunits.

It catalyses the reaction L-glutamyl-tRNA(Gln) + L-glutamine + ATP + H2O = L-glutaminyl-tRNA(Gln) + L-glutamate + ADP + phosphate + H(+). It carries out the reaction L-aspartyl-tRNA(Asn) + L-glutamine + ATP + H2O = L-asparaginyl-tRNA(Asn) + L-glutamate + ADP + phosphate + 2 H(+). Its function is as follows. Allows the formation of correctly charged Asn-tRNA(Asn) or Gln-tRNA(Gln) through the transamidation of misacylated Asp-tRNA(Asn) or Glu-tRNA(Gln) in organisms which lack either or both of asparaginyl-tRNA or glutaminyl-tRNA synthetases. The reaction takes place in the presence of glutamine and ATP through an activated phospho-Asp-tRNA(Asn) or phospho-Glu-tRNA(Gln). This is Aspartyl/glutamyl-tRNA(Asn/Gln) amidotransferase subunit B from Cupriavidus pinatubonensis (strain JMP 134 / LMG 1197) (Cupriavidus necator (strain JMP 134)).